Reading from the N-terminus, the 150-residue chain is Transcriptional regulator MraZ (150 aa).

SpoVT-AbrB domains are found at residues 8-55 (FINN…GISH) and 84-127 (AVQL…QPQN).

It belongs to the MraZ family. In terms of assembly, forms oligomers.

It is found in the cytoplasm. The protein resides in the nucleoid. This Rickettsia bellii (strain OSU 85-389) protein is Transcriptional regulator MraZ.